The chain runs to 61 residues: Metallothionein-1L (61 aa).

Positions 1–29 (MDPNCSCATGGSCSCASSCKCKECKCTSC) are beta. Positions 5, 7, 13, 15, 19, 21, 24, 26, 29, 33, 34, 36, 37, 41, 44, 48, 50, 57, 59, and 60 each coordinate a divalent metal cation. The tract at residues 30 to 61 (KKSCCSCCPMGCAKCAQGCVCKGASEKCSCCA) is alpha.

Belongs to the metallothionein superfamily. Type 1 family. As to quaternary structure, monomer. Expressed in reticulocytes.

Functionally, metallothioneins have a high content of cysteine residues that bind various heavy metals; these proteins are transcriptionally regulated by both heavy metals and glucocorticoids. The protein is Metallothionein-1L (MT1L) of Homo sapiens (Human).